Here is a 901-residue protein sequence, read N- to C-terminus: Probable inorganic carbon transporter subunit DabA (901 aa).

Residues C424, D426, H606, and C621 each contribute to the Zn(2+) site.

The protein belongs to the inorganic carbon transporter (TC 9.A.2) DabA family. As to quaternary structure, forms a complex with DabB. Zn(2+) serves as cofactor.

The protein resides in the cell membrane. Part of an energy-coupled inorganic carbon pump. This chain is Probable inorganic carbon transporter subunit DabA, found in Staphylococcus aureus (strain MRSA252).